Consider the following 895-residue polypeptide: Catenin alpha-3 (895 aa).

Ser-56 is modified (phosphoserine). Positions 74–111 form a coiled coil; that stretch reads EKIAQEATVLKDELTASLEEVRKESEALKVSAERFTDD. Position 160 is a phosphoserine (Ser-160). A coiled-coil region spans residues 325–379; that stretch reads RERIIAECNAIRQALQDLLSEYMNNAGKKERSNTLNIALDNMCKKTRDLRRQLRK. Residues Ser-637 and Ser-647 each carry the phosphoserine modification. Thr-649 is subject to Phosphothreonine.

Belongs to the vinculin/alpha-catenin family. In terms of assembly, interacts with CTNNB1. Interacts with PKP2. Predominantly expressed in heart and testis. Expressed at lower levels in brain, kidney, liver and skeletal muscle.

Its subcellular location is the cytoplasm. The protein localises to the cytoskeleton. It localises to the cell junction. The protein resides in the desmosome. Functionally, may be involved in formation of stretch-resistant cell-cell adhesion complexes. This chain is Catenin alpha-3, found in Homo sapiens (Human).